Here is a 97-residue protein sequence, read N- to C-terminus: Putative pterin-4-alpha-carbinolamine dehydratase (97 aa).

The protein belongs to the pterin-4-alpha-carbinolamine dehydratase family.

The catalysed reaction is (4aS,6R)-4a-hydroxy-L-erythro-5,6,7,8-tetrahydrobiopterin = (6R)-L-erythro-6,7-dihydrobiopterin + H2O. This Christiangramia forsetii (strain DSM 17595 / CGMCC 1.15422 / KT0803) (Gramella forsetii) protein is Putative pterin-4-alpha-carbinolamine dehydratase.